We begin with the raw amino-acid sequence, 805 residues long: Putative cation-transporting ATPase MJ1226 (805 aa).

4 consecutive transmembrane segments (helical) span residues 53–73 (SYFWNPIAWMIEIAAILSAII), 75–95 (HWVDFVIILILLLVNGVVGFW), 226–246 (IGDYLIVLAVILIAIMVAVEL), and 258–278 (FALVLAVSAIPAAMPAVLSIT). Residue Asp-311 is the 4-aspartylphosphate intermediate of the active site. 6 helical membrane-spanning segments follow: residues 615 to 637 (YVIYRITETIRILFFVELCILIL), 641 to 663 (PITALMIVLLAILNDIPILAIAY), 680 to 700 (ILMLSTALGLSGVVSSFLIFY), 712 to 734 (ELQSFVFLKLILAGHATIFVTRI), 747 to 769 (LLFWGVMGTNIIGTIVAAEGIFM), and 773 to 790 (GWDLALFMWLYAHVWMLI).

The protein belongs to the cation transport ATPase (P-type) (TC 3.A.3) family. Type IIIA subfamily.

The protein resides in the cell membrane. The catalysed reaction is ATP + H2O = ADP + phosphate + H(+). This is Putative cation-transporting ATPase MJ1226 from Methanocaldococcus jannaschii (strain ATCC 43067 / DSM 2661 / JAL-1 / JCM 10045 / NBRC 100440) (Methanococcus jannaschii).